Consider the following 217-residue polypeptide: Large ribosomal subunit protein bL25 (217 aa).

The disordered stretch occupies residues valine 178–glutamate 217. A compositionally biased stretch (acidic residues) spans glutamate 184–valine 205. Positions glycine 206–glutamate 217 are enriched in basic and acidic residues.

This sequence belongs to the bacterial ribosomal protein bL25 family. CTC subfamily. As to quaternary structure, part of the 50S ribosomal subunit; part of the 5S rRNA/L5/L18/L25 subcomplex. Contacts the 5S rRNA. Binds to the 5S rRNA independently of L5 and L18.

This is one of the proteins that binds to the 5S RNA in the ribosome where it forms part of the central protuberance. The sequence is that of Large ribosomal subunit protein bL25 from Staphylococcus aureus (strain USA300).